The sequence spans 344 residues: L-threonine 3-dehydrogenase (344 aa).

Residue Cys-42 participates in Zn(2+) binding. Catalysis depends on charge relay system residues Thr-44 and His-47. Zn(2+) contacts are provided by His-67, Glu-68, Cys-97, Cys-100, Cys-103, and Cys-111. NAD(+) is bound by residues Ile-179, Asp-199, Arg-204, 266–268 (LGI), and 290–291 (IY).

This sequence belongs to the zinc-containing alcohol dehydrogenase family. In terms of assembly, homotetramer. The cofactor is Zn(2+).

The protein resides in the cytoplasm. It catalyses the reaction L-threonine + NAD(+) = (2S)-2-amino-3-oxobutanoate + NADH + H(+). The protein operates within amino-acid degradation; L-threonine degradation via oxydo-reductase pathway; glycine from L-threonine: step 1/2. Catalyzes the NAD(+)-dependent oxidation of L-threonine to 2-amino-3-ketobutyrate. The polypeptide is L-threonine 3-dehydrogenase (Chelativorans sp. (strain BNC1)).